The sequence spans 510 residues: GMP synthase [glutamine-hydrolyzing] (510 aa).

The 191-residue stretch at 5 to 195 (LVLILDFGGQ…LYEVCHCQGD (191 aa)) folds into the Glutamine amidotransferase type-1 domain. C82 (nucleophile) is an active-site residue. Residues H169 and E171 contribute to the active site. The region spanning 196 to 385 (WTMENYIEKE…LGVPEEIVWR (190 aa)) is the GMPS ATP-PPase domain. Residue 223–229 (SGGVDSS) participates in ATP binding.

Homodimer.

It catalyses the reaction XMP + L-glutamine + ATP + H2O = GMP + L-glutamate + AMP + diphosphate + 2 H(+). Its pathway is purine metabolism; GMP biosynthesis; GMP from XMP (L-Gln route): step 1/1. Functionally, catalyzes the synthesis of GMP from XMP. The protein is GMP synthase [glutamine-hydrolyzing] of Alkaliphilus metalliredigens (strain QYMF).